The sequence spans 31 residues: Cytochrome b6-f complex subunit 6 (31 aa).

The helical transmembrane segment at 4–24 (ITSYFGFLLAALTITSVLFIG) threads the bilayer.

This sequence belongs to the PetL family. The 4 large subunits of the cytochrome b6-f complex are cytochrome b6, subunit IV (17 kDa polypeptide, PetD), cytochrome f and the Rieske protein, while the 4 small subunits are PetG, PetL, PetM and PetN. The complex functions as a dimer.

The protein localises to the plastid. It localises to the chloroplast thylakoid membrane. In terms of biological role, component of the cytochrome b6-f complex, which mediates electron transfer between photosystem II (PSII) and photosystem I (PSI), cyclic electron flow around PSI, and state transitions. PetL is important for photoautotrophic growth as well as for electron transfer efficiency and stability of the cytochrome b6-f complex. The protein is Cytochrome b6-f complex subunit 6 of Arabidopsis thaliana (Mouse-ear cress).